We begin with the raw amino-acid sequence, 216 residues long: Ras-related protein Rab-5C (216 aa).

GTP contacts are provided by Ser-30, Ala-31, Gly-33, Lys-34, Ser-35, Ser-36, His-47, Glu-48, Thr-53, and Gly-79. Ser-35 lines the Mg(2+) pocket. 2 short sequence motifs (switch) span residues 45–57 (QFHE…IGAA) and 78–94 (AGQE…YRGA). A Mg(2+)-binding site is contributed by Thr-53. Ser-85 carries the post-translational modification Phosphoserine. Positions 134, 135, 137, 165, and 166 each coordinate GTP. The disordered stretch occupies residues 185–216 (NEPQNAAGAPGRNRGVDLQENNPASRSQCCSN). Over residues 203 to 216 (QENNPASRSQCCSN) the composition is skewed to polar residues. 2 S-geranylgeranyl cysteine lipidation sites follow: Cys-213 and Cys-214.

It belongs to the small GTPase superfamily. Rab family. Interacts with EEA1 and INCA1. Interacts with GDI1, GDI2, CHML and CHM; phosphorylation at Ser-85 disrupts this interaction. It depends on Mg(2+) as a cofactor. Post-translationally, phosphorylation of Ser-85 in the switch II region by LRRK2 prevents the association of RAB regulatory proteins, including CHM, CHML and RAB GDP dissociation inhibitors GDI1 and GDI2.

The protein localises to the cell membrane. The protein resides in the early endosome membrane. Its subcellular location is the melanosome. The catalysed reaction is GTP + H2O = GDP + phosphate + H(+). Regulated by guanine nucleotide exchange factors (GEFs) which promote the exchange of bound GDP for free GTP. Regulated by GTPase activating proteins (GAPs) which increase the GTP hydrolysis activity. Inhibited by GDP dissociation inhibitors (GDIs). In terms of biological role, the small GTPases Rab are key regulators of intracellular membrane trafficking, from the formation of transport vesicles to their fusion with membranes. Rabs cycle between an inactive GDP-bound form and an active GTP-bound form that is able to recruit to membranes different sets of downstream effectors directly responsible for vesicle formation, movement, tethering and fusion. The sequence is that of Ras-related protein Rab-5C (RAB5C) from Bos taurus (Bovine).